Here is a 1179-residue protein sequence, read N- to C-terminus: MEEKIKSNLIHSKTNEDIELIKQKLKEDRELLEKERAQFEEERKIIFESLNKVVGSGSANITKNIAKALKKAEKKNGVGSNLNLANSSSGSNISVYNNNNNNNNNNNSNNIGTPFNVQHKVHVDFDYKWSGCQDLEQVFLIDCILGTGSYGTVYKAIHKDTNFVLAIKSIPIKESEEIEKEISILKKCKSQNIVSYFGSGQQGDNLWILMEYCSANSIRDMLELTEKSLTEKQISVILQQALKGLHYLHQSNIIHRDIKAANILINEDAIVKLADFGVSSQLEDSLRGEASQLVGTPLWMAPEIIKRQNYNNKCDIWSLGITAIEMAESFPPLYTMPPTRAMLMIPNKPPPTLSKPHHFSKELNDFIGQCCQKDPEKRPSAIELLTHPFLVQNISTPQEVLKPLIDECLKKSIKKKKQSPNNDQPPPPQTPNKLSPPDTPLPNVPVLGKNQGLLNKSNGMKKSHGSSLDEAESMNTFILKSTIGSSSNGSNDTGGDDFDCGTMILKDDTCINGSGNADKISTIPAFIAALNKSNGKVITQNQQQQQQQPIASSLQQSNPIASIVNENQYPNTIEKRGLSSINSNNSLLIGNSGNNKSQNFNNFNNNNNNNNNNNNNNNNNNNNNNNNNNNNEFLINQIKKELILDFNENMKQYINQQLTNLKEEMLKEISKIVIANIPQAPIKTSQSVFNQQLSAAAIIHPISSSSSSSSSFLNSSPSSSNSSATIFKKFPNPPPTPVLINKLPPSQQSTPVTTTTTTSSPSPSPSPSPSPSPSSPLPSSSTSTVNTPNKPPINYRKSKELDSTINIFNGLNNNNTNNNNNNNNSNNNNNNNNVIQSPKLNNRPLSPTTPTKQFNNRPPSPSKFNNRPPSPSKFNNRPPSPSNRPLSPKNSYNSLEKSNNGSISNNRPLSPKNSLEKSTTQNNTSSEDISTTTVTVTSEQGGTPITTPMAFLPRPKPSPPPIPMNKSSPKRAPSPSSNRRLSSSFTAQSSTASTIAALGKQSSMSPNSPLIKERVPPPLPPPRTTITSSTNSPIKPLSPLNKSPNSPYVPPRITTSNISNNSNINNNNNNNSNSSSNGSGGTPITLKRASTTISPIMISSNSPKVMGSNVNKPLALSRNSTEINLPSSSPSTPQKPNTPSSIPTTPTTPTTNGGSVSSKSSTIGRKTVLQVKSIFSPKK.

A coiled-coil region spans residues 12-53 (SKTNEDIELIKQKLKEDRELLEKERAQFEEERKIIFESLNKV). In terms of domain architecture, CRIB spans 111 to 124 (IGTPFNVQHKVHVD). The region spanning 139 to 390 (FLIDCILGTG…AIELLTHPFL (252 aa)) is the Protein kinase domain. ATP-binding positions include 145 to 153 (LGTGSYGTV) and K168. Residue D257 is the Proton acceptor of the active site. Disordered stretches follow at residues 414 to 469 (KKKK…SSLD), 589 to 631 (IGNS…NNNN), 705 to 1086 (SSSS…PITL), and 1121 to 1179 (TEIN…SPKK). The stretch at 621–668 (NNNNNNNNNNNEFLINQIKKELILDFNENMKQYINQQLTNLKEEMLKE) forms a coiled coil. Composition is skewed to low complexity over residues 705-723 (SSSS…SNSS) and 743-761 (LPPS…TSSP). Residues 762–776 (SPSPSPSPSPSPSSP) show a composition bias toward pro residues. Low complexity-rich tracts occupy residues 777–788 (LPSSSTSTVNTP) and 812–833 (NNNN…NNNN). Polar residues predominate over residues 834–857 (VIQSPKLNNRPLSPTTPTKQFNNR). Over residues 864 to 891 (FNNRPPSPSKFNNRPPSPSNRPLSPKNS) the composition is skewed to low complexity. A compositionally biased stretch (polar residues) spans 892–946 (YNSLEKSNNGSISNNRPLSPKNSLEKSTTQNNTSSEDISTTTVTVTSEQGGTPIT). Pro residues predominate over residues 954-963 (RPKPSPPPIP). Composition is skewed to low complexity over residues 964 to 997 (MNKS…TIAA), 1024 to 1046 (TTIT…SPNS), and 1053 to 1077 (ITTS…SSSN). Residues 1121-1135 (TEINLPSSSPSTPQK) are compositionally biased toward polar residues. Positions 1137-1158 (NTPSSIPTTPTTPTTNGGSVSS) are enriched in low complexity.

It belongs to the protein kinase superfamily. STE Ser/Thr protein kinase family. STE20 subfamily. Requires Mg(2+) as cofactor.

The enzyme catalyses L-seryl-[protein] + ATP = O-phospho-L-seryl-[protein] + ADP + H(+). It catalyses the reaction L-threonyl-[protein] + ATP = O-phospho-L-threonyl-[protein] + ADP + H(+). The protein is Serine/threonine-protein kinase pakG of Dictyostelium discoideum (Social amoeba).